The sequence spans 510 residues: ATP synthase subunit alpha (510 aa).

Position 169–176 (169–176 (GDRQTGKT)) interacts with ATP.

Belongs to the ATPase alpha/beta chains family. As to quaternary structure, F-type ATPases have 2 components, CF(1) - the catalytic core - and CF(0) - the membrane proton channel. CF(1) has five subunits: alpha(3), beta(3), gamma(1), delta(1), epsilon(1). CF(0) has four main subunits: a(1), b(1), b'(1) and c(9-12).

The protein localises to the cell inner membrane. The enzyme catalyses ATP + H2O + 4 H(+)(in) = ADP + phosphate + 5 H(+)(out). Produces ATP from ADP in the presence of a proton gradient across the membrane. The alpha chain is a regulatory subunit. The sequence is that of ATP synthase subunit alpha from Rhodospirillum rubrum (strain ATCC 11170 / ATH 1.1.1 / DSM 467 / LMG 4362 / NCIMB 8255 / S1).